Reading from the N-terminus, the 246-residue chain is 3-deoxy-manno-octulosonate cytidylyltransferase (246 aa).

It belongs to the KdsB family.

The protein localises to the cytoplasm. It carries out the reaction 3-deoxy-alpha-D-manno-oct-2-ulosonate + CTP = CMP-3-deoxy-beta-D-manno-octulosonate + diphosphate. The protein operates within nucleotide-sugar biosynthesis; CMP-3-deoxy-D-manno-octulosonate biosynthesis; CMP-3-deoxy-D-manno-octulosonate from 3-deoxy-D-manno-octulosonate and CTP: step 1/1. Its pathway is bacterial outer membrane biogenesis; lipopolysaccharide biosynthesis. In terms of biological role, activates KDO (a required 8-carbon sugar) for incorporation into bacterial lipopolysaccharide in Gram-negative bacteria. The sequence is that of 3-deoxy-manno-octulosonate cytidylyltransferase from Bradyrhizobium sp. (strain ORS 278).